A 763-amino-acid polypeptide reads, in one-letter code: MAP7 domain-containing protein 2 (763 aa).

Over residues 1-11 (MERGGGGGFGT) the composition is skewed to gly residues. Disordered stretches follow at residues 1 to 63 (MERG…KERR), 96 to 124 (WRKL…LREE), 149 to 268 (SWGA…DVGK), and 300 to 540 (PLRR…KQKE). The span at 52–63 (SGERQRLAKERR) shows a compositional bias: basic and acidic residues. A coiled-coil region spans residues 54–147 (ERQRLAKERR…RTQQLELKKK (94 aa)). Positions 192–206 (ESTNACDKLSTSTMS) are enriched in polar residues. Composition is skewed to basic and acidic residues over residues 355–371 (MPKR…EREG), 385–400 (ALEK…EKHA), and 430–540 (LAEK…KQKE).

This sequence belongs to the MAP7 family. In terms of assembly, interacts (via N-terminus) with microtubules; facilitates microtubule stabilization. Interacts with kinesin-1 family members, KIF5A, KIF5B and KIF5C.

It localises to the cytoplasm. The protein resides in the cytoskeleton. It is found in the microtubule organizing center. The protein localises to the centrosome. Its subcellular location is the midbody. It localises to the cell projection. The protein resides in the neuron projection. It is found in the axon. Functionally, microtubule-stabilizing protein involved in the control of cell motility and neurite outgrowth. Acts as a critical cofactor for kinesin transport; in the proximal axon regulates kinesin-1 family members, KIF5A, KIF5B and KIF5C recruitment to microtubules and contributes to kinesin-1-mediated transport in the axons. The sequence is that of MAP7 domain-containing protein 2 (MAP7D2) from Pongo abelii (Sumatran orangutan).